The following is a 256-amino-acid chain: DNA repair protein RecO (256 aa).

This sequence belongs to the RecO family.

Involved in DNA repair and RecF pathway recombination. The protein is DNA repair protein RecO of Shouchella clausii (strain KSM-K16) (Alkalihalobacillus clausii).